The sequence spans 153 residues: NAD(P)H-quinone oxidoreductase subunit N (153 aa).

This sequence belongs to the complex I NdhN subunit family. As to quaternary structure, NDH-1 can be composed of about 15 different subunits; different subcomplexes with different compositions have been identified which probably have different functions.

It localises to the cellular thylakoid membrane. It carries out the reaction a plastoquinone + NADH + (n+1) H(+)(in) = a plastoquinol + NAD(+) + n H(+)(out). The catalysed reaction is a plastoquinone + NADPH + (n+1) H(+)(in) = a plastoquinol + NADP(+) + n H(+)(out). Its function is as follows. NDH-1 shuttles electrons from an unknown electron donor, via FMN and iron-sulfur (Fe-S) centers, to quinones in the respiratory and/or the photosynthetic chain. The immediate electron acceptor for the enzyme in this species is believed to be plastoquinone. Couples the redox reaction to proton translocation, and thus conserves the redox energy in a proton gradient. Cyanobacterial NDH-1 also plays a role in inorganic carbon-concentration. The protein is NAD(P)H-quinone oxidoreductase subunit N of Synechococcus sp. (strain CC9605).